The following is a 196-amino-acid chain: Homeobox protein XENK-2 (196 aa).

The segment at 48-72 is disordered; it reads PSADESPDNDKELSSNPDSGKKRKR. The homeobox DNA-binding region spans 69–128; it reads KRKRRVLFSKAQTYELERRFRQQRYLSAPEREHLASLIRLTPTQVKIWFQNHRYKMKRAR.

It belongs to the NK-2 homeobox family. In terms of tissue distribution, forebrain and midbrain.

Its subcellular location is the nucleus. In terms of biological role, defines dorsal-ventral domains in developing brain. May play a role in defining positional information along the anterior-posterior (a/p) axis and the dorsal-ventral (d/v) axis of the developing nervous system. May be involved in determining positional or boundary information rather than determining a given cell type. The protein is Homeobox protein XENK-2 of Xenopus laevis (African clawed frog).